An 831-amino-acid polypeptide reads, in one-letter code: Valine--tRNA ligase (831 aa).

The short motif at 77-87 (PFTSGELHMGH) is the 'HIGH' region element. The short motif at 564–568 (RMSKS) is the 'KMSKS' region element. Lys-567 is a binding site for ATP.

This sequence belongs to the class-I aminoacyl-tRNA synthetase family. ValS type 2 subfamily.

Its subcellular location is the cytoplasm. The catalysed reaction is tRNA(Val) + L-valine + ATP = L-valyl-tRNA(Val) + AMP + diphosphate. Catalyzes the attachment of valine to tRNA(Val). As ValRS can inadvertently accommodate and process structurally similar amino acids such as threonine, to avoid such errors, it has a 'posttransfer' editing activity that hydrolyzes mischarged Thr-tRNA(Val) in a tRNA-dependent manner. The protein is Valine--tRNA ligase of Sulfolobus acidocaldarius (strain ATCC 33909 / DSM 639 / JCM 8929 / NBRC 15157 / NCIMB 11770).